Reading from the N-terminus, the 372-residue chain is MRISRLLIRVLLGFVILFITYILFPSIPKALVNTLNVYKLEERLNYYNDRLLDGNLKSKELENATFVTLARNADLYDLIETINIYENRFNSKHNYPWVFLNDEPFTRTFEVVMSRLTSGPTYFGVVNSSEWDIPKWIDMDIAHSNWNRLSREGVLYGGMKSYRQMCRYFSGFFWRHPLLDPYKYYWRVEPSTKLLCEVNKDPFRQLRLLNKTYGFVITLFEIGQTVPSLWNSTLEFIEKYPETLAKNNLWEWISDDNGKKFSHCHFWSNFEIADLDFFRSDSYRKYFDFLDKKGGFFYERWGDAPVHSIALSLFLDRNKLHYFDEIGYSHAPLLHCPRKGRCFCKPEEIDLSSNSSCIARFINLTNEDYDEL.

Residues 1–6 lie on the Cytoplasmic side of the membrane; that stretch reads MRISRL. Residues 7–27 traverse the membrane as a helical; Signal-anchor for type II membrane protein segment; sequence LIRVLLGFVILFITYILFPSI. Topologically, residues 28–372 are lumenal; the sequence is PKALVNTLNV…NLTNEDYDEL (345 aa). Glutamate 271 functions as the Nucleophile in the catalytic mechanism.

The protein belongs to the glycosyltransferase 15 family.

The protein localises to the endoplasmic reticulum membrane. Its function is as follows. Probable mannosyltransferase involved in O-glycosylation of cell wall and secreted proteins. This chain is O-glycoside alpha-1,2-mannosyltransferase homolog 2 (omh2), found in Schizosaccharomyces pombe (strain 972 / ATCC 24843) (Fission yeast).